A 424-amino-acid polypeptide reads, in one-letter code: Enolase (424 aa).

Glutamine 162 contacts (2R)-2-phosphoglycerate. The active-site Proton donor is the glutamate 204. Positions 241, 284, and 311 each coordinate Mg(2+). The (2R)-2-phosphoglycerate site is built by lysine 336, arginine 365, serine 366, and lysine 387. Lysine 336 acts as the Proton acceptor in catalysis.

Belongs to the enolase family. The cofactor is Mg(2+).

The protein localises to the cytoplasm. It is found in the secreted. It localises to the cell surface. The enzyme catalyses (2R)-2-phosphoglycerate = phosphoenolpyruvate + H2O. Its pathway is carbohydrate degradation; glycolysis; pyruvate from D-glyceraldehyde 3-phosphate: step 4/5. Functionally, catalyzes the reversible conversion of 2-phosphoglycerate (2-PG) into phosphoenolpyruvate (PEP). It is essential for the degradation of carbohydrates via glycolysis. In Sinorhizobium medicae (strain WSM419) (Ensifer medicae), this protein is Enolase.